Reading from the N-terminus, the 576-residue chain is Protein alan shepard (576 aa).

Positions 1 to 12 are enriched in pro residues; it reads MHPRYSPAPPPQ. Residues 1 to 66 are disordered; sequence MHPRYSPAPP…GSSSSAAAAP (66 aa). Tyrosine 5 bears the Phosphotyrosine mark. The segment covering 13-24 has biased composition (low complexity); it reads QQQQMGGPPHQQ. The segment covering 25-35 has biased composition (gly residues); it reads QGGGGGGGGNM. Residues 37–54 show a composition bias toward polar residues; it reads GPSNAQQLPPQIPRSQNY. The span at 55 to 66 shows a compositional bias: low complexity; it reads SNGSSSSAAAAP. Phosphotyrosine occurs at positions 125 and 142. A disordered region spans residues 164-225; that stretch reads PATTTYGQRV…TVQNQNQQGG (62 aa). A compositionally biased stretch (low complexity) spans 178–225; the sequence is SPSNTNSSSSSNTGSQSGTLSTSLSNTTNTNTNMGPNGTVQNQNQQGG. 2 RRM domains span residues 231–302 and 308–387; these read TNLY…MAKQ and TNLY…FADG. Positions 538 to 576 are disordered; that stretch reads YAPPPTIIPTMPMTDSEQASTAASPDEAYTQYPHQAAPK.

Functionally, has a role in the perception of gravity. The chain is Protein alan shepard from Drosophila simulans (Fruit fly).